Here is a 238-residue protein sequence, read N- to C-terminus: DNA repair protein RecO (238 aa).

Belongs to the RecO family.

In terms of biological role, involved in DNA repair and RecF pathway recombination. This chain is DNA repair protein RecO, found in Aliivibrio salmonicida (strain LFI1238) (Vibrio salmonicida (strain LFI1238)).